Consider the following 128-residue polypeptide: Mediator of RNA polymerase II transcription subunit 31 (128 aa).

This sequence belongs to the Mediator complex subunit 31 family. In terms of assembly, component of the Mediator complex.

It localises to the nucleus. In terms of biological role, component of the Mediator complex, a coactivator involved in the regulated transcription of nearly all RNA polymerase II-dependent genes. Mediator functions as a bridge to convey information from gene-specific regulatory proteins to the basal RNA polymerase II transcription machinery. Mediator is recruited to promoters by direct interactions with regulatory proteins and serves as a scaffold for the assembly of a functional preinitiation complex with RNA polymerase II and the general transcription factors. The sequence is that of Mediator of RNA polymerase II transcription subunit 31 (med31) from Xenopus tropicalis (Western clawed frog).